Here is a 98-residue protein sequence, read N- to C-terminus: NADH-ubiquinone oxidoreductase chain 4L (98 aa).

The next 3 helical transmembrane spans lie at 1 to 21, 29 to 49, and 61 to 81; these read MPYIYMNITLAFVISLIGTLM, SLLCLEGMMLSLFTLNALLSL, and LILLVFAACEAAVGLALLIMI.

The protein belongs to the complex I subunit 4L family. As to quaternary structure, core subunit of respiratory chain NADH dehydrogenase (Complex I) which is composed of 45 different subunits.

It localises to the mitochondrion inner membrane. The catalysed reaction is a ubiquinone + NADH + 5 H(+)(in) = a ubiquinol + NAD(+) + 4 H(+)(out). Its function is as follows. Core subunit of the mitochondrial membrane respiratory chain NADH dehydrogenase (Complex I) which catalyzes electron transfer from NADH through the respiratory chain, using ubiquinone as an electron acceptor. Part of the enzyme membrane arm which is embedded in the lipid bilayer and involved in proton translocation. The chain is NADH-ubiquinone oxidoreductase chain 4L (MT-ND4L) from Mammuthus primigenius (Siberian woolly mammoth).